Here is a 375-residue protein sequence, read N- to C-terminus: N-acetylneuraminate epimerase (375 aa).

Positions Met1 to Ala22 are cleaved as a signal peptide. Kelch repeat units lie at residues Thr43–Asp87, Lys89–Gly140, Lys142–Ala176, Ala177–Gly222, Leu225–Ala273, Lys295–Asn344, and Val346–Glu375. The active-site Proton acceptor is Glu231.

Belongs to the NanM family. In terms of assembly, homodimer.

It localises to the periplasm. It carries out the reaction N-acetyl-alpha-neuraminate = N-acetyl-beta-neuraminate. Converts alpha-N-acetylneuranimic acid (Neu5Ac) to the beta-anomer, accelerating the equilibrium between the alpha- and beta-anomers. Probably facilitates sialidase-negative bacteria to compete successfully for limited amounts of extracellular Neu5Ac, which is likely taken up in the beta-anomer. In addition, the rapid removal of sialic acid from solution might be advantageous to the bacterium to damp down host responses. The sequence is that of N-acetylneuraminate epimerase from Haemophilus influenzae (strain PittEE).